Reading from the N-terminus, the 21-residue chain is Hemocyanin subunit 6 (21 aa).

Belongs to the tyrosinase family. Hemocyanin subfamily. As to expression, hemolymph.

Its subcellular location is the secreted. The protein localises to the extracellular space. Functionally, hemocyanins are copper-containing oxygen carriers occurring freely dissolved in the hemolymph of many mollusks and arthropods. This chain is Hemocyanin subunit 6, found in Maja squinado (Mediterranean spider crab).